A 78-amino-acid polypeptide reads, in one-letter code: Acyl carrier protein (78 aa).

The 76-residue stretch at 2–77 folds into the Carrier domain; it reads SDIAERVKKI…DAIKFLEKNA (76 aa). Residue S37 is modified to O-(pantetheine 4'-phosphoryl)serine.

This sequence belongs to the acyl carrier protein (ACP) family. 4'-phosphopantetheine is transferred from CoA to a specific serine of apo-ACP by AcpS. This modification is essential for activity because fatty acids are bound in thioester linkage to the sulfhydryl of the prosthetic group.

Its subcellular location is the cytoplasm. The protein operates within lipid metabolism; fatty acid biosynthesis. In terms of biological role, carrier of the growing fatty acid chain in fatty acid biosynthesis. This Azorhizobium caulinodans (strain ATCC 43989 / DSM 5975 / JCM 20966 / LMG 6465 / NBRC 14845 / NCIMB 13405 / ORS 571) protein is Acyl carrier protein.